Here is a 228-residue protein sequence, read N- to C-terminus: Uracil-DNA glycosylase (228 aa).

D64 (proton acceptor) is an active-site residue.

The protein belongs to the uracil-DNA glycosylase (UDG) superfamily. UNG family.

The protein localises to the cytoplasm. It catalyses the reaction Hydrolyzes single-stranded DNA or mismatched double-stranded DNA and polynucleotides, releasing free uracil.. Its function is as follows. Excises uracil residues from the DNA which can arise as a result of misincorporation of dUMP residues by DNA polymerase or due to deamination of cytosine. The chain is Uracil-DNA glycosylase from Yersinia pseudotuberculosis serotype IB (strain PB1/+).